The sequence spans 360 residues: Glutamate 5-kinase (360 aa).

An ATP-binding site is contributed by Lys-7. Residues Ser-47, Asp-134, and Asn-146 each coordinate substrate. ATP-binding positions include 166–167 (TD) and 208–214 (TGGIKTK). The region spanning 273–344 (VGEIHLDDGA…IGINSRSETT (72 aa)) is the PUA domain.

This sequence belongs to the glutamate 5-kinase family.

The protein resides in the cytoplasm. It carries out the reaction L-glutamate + ATP = L-glutamyl 5-phosphate + ADP. It functions in the pathway amino-acid biosynthesis; L-proline biosynthesis; L-glutamate 5-semialdehyde from L-glutamate: step 1/2. In terms of biological role, catalyzes the transfer of a phosphate group to glutamate to form L-glutamate 5-phosphate. This chain is Glutamate 5-kinase, found in Prochlorococcus marinus (strain NATL2A).